The chain runs to 418 residues: Gamma-glutamyl phosphate reductase (418 aa).

It belongs to the gamma-glutamyl phosphate reductase family.

The protein resides in the cytoplasm. It carries out the reaction L-glutamate 5-semialdehyde + phosphate + NADP(+) = L-glutamyl 5-phosphate + NADPH + H(+). Its pathway is amino-acid biosynthesis; L-proline biosynthesis; L-glutamate 5-semialdehyde from L-glutamate: step 2/2. Its function is as follows. Catalyzes the NADPH-dependent reduction of L-glutamate 5-phosphate into L-glutamate 5-semialdehyde and phosphate. The product spontaneously undergoes cyclization to form 1-pyrroline-5-carboxylate. This Geobacter metallireducens (strain ATCC 53774 / DSM 7210 / GS-15) protein is Gamma-glutamyl phosphate reductase.